The chain runs to 158 residues: NAD(P)H-quinone oxidoreductase subunit J, chloroplastic (158 aa).

It belongs to the complex I 30 kDa subunit family. In terms of assembly, NDH is composed of at least 16 different subunits, 5 of which are encoded in the nucleus.

The protein resides in the plastid. The protein localises to the chloroplast thylakoid membrane. It carries out the reaction a plastoquinone + NADH + (n+1) H(+)(in) = a plastoquinol + NAD(+) + n H(+)(out). The enzyme catalyses a plastoquinone + NADPH + (n+1) H(+)(in) = a plastoquinol + NADP(+) + n H(+)(out). Functionally, NDH shuttles electrons from NAD(P)H:plastoquinone, via FMN and iron-sulfur (Fe-S) centers, to quinones in the photosynthetic chain and possibly in a chloroplast respiratory chain. The immediate electron acceptor for the enzyme in this species is believed to be plastoquinone. Couples the redox reaction to proton translocation, and thus conserves the redox energy in a proton gradient. This chain is NAD(P)H-quinone oxidoreductase subunit J, chloroplastic, found in Vitis vinifera (Grape).